Here is a 562-residue protein sequence, read N- to C-terminus: Oxygen-dependent choline dehydrogenase (562 aa).

Position 4–33 (Asp-4–Glu-33) interacts with FAD. The active-site Proton acceptor is His-473.

Belongs to the GMC oxidoreductase family. Requires FAD as cofactor.

It carries out the reaction choline + A = betaine aldehyde + AH2. The catalysed reaction is betaine aldehyde + NAD(+) + H2O = glycine betaine + NADH + 2 H(+). It functions in the pathway amine and polyamine biosynthesis; betaine biosynthesis via choline pathway; betaine aldehyde from choline (cytochrome c reductase route): step 1/1. Its function is as follows. Involved in the biosynthesis of the osmoprotectant glycine betaine. Catalyzes the oxidation of choline to betaine aldehyde and betaine aldehyde to glycine betaine at the same rate. This is Oxygen-dependent choline dehydrogenase from Escherichia coli (strain SMS-3-5 / SECEC).